Here is a 139-residue protein sequence, read N- to C-terminus: Putative pre-16S rRNA nuclease (139 aa).

It belongs to the YqgF nuclease family.

Its subcellular location is the cytoplasm. Its function is as follows. Could be a nuclease involved in processing of the 5'-end of pre-16S rRNA. The polypeptide is Putative pre-16S rRNA nuclease (Streptococcus pyogenes serotype M1).